The following is a 77-amino-acid chain: UPF0291 protein RBAM_017680 (77 aa).

A disordered region spans residues 55–77 (IDPEGNDVTPEKLKREQQKNNLH). The span at 63 to 77 (TPEKLKREQQKNNLH) shows a compositional bias: basic and acidic residues.

It belongs to the UPF0291 family.

It localises to the cytoplasm. The chain is UPF0291 protein RBAM_017680 from Bacillus velezensis (strain DSM 23117 / BGSC 10A6 / LMG 26770 / FZB42) (Bacillus amyloliquefaciens subsp. plantarum).